Consider the following 706-residue polypeptide: Kinesin-like protein KIF2A (706 aa).

The tract at residues 1 to 217 (MATANFGKIQ…LDYRPLTTAD (217 aa)) is globular. Residues 66–139 (LVPDEEIEPS…AQQNGSVSDI (74 aa)) form a disordered region. At Ser-75 the chain carries Phosphoserine. Thr-78 and Thr-97 each carry phosphothreonine. A Phosphoserine modification is found at Ser-100. Lys-102 is modified (N6-acetyllysine). A compositionally biased stretch (polar residues) spans 123–139 (FPEQSSSAQQNGSVSDI). Ser-135 and Ser-140 each carry phosphoserine. The disordered stretch occupies residues 165 to 186 (KLQEKREKRRLQQQELREKRAQ). Residues 223 to 553 (RICVCVRKRP…LRYANRVKEL (331 aa)) enclose the Kinesin motor domain. 313-320 (GQTGSGKT) serves as a coordination point for ATP. Residues Asp-556 and Gln-573 each carry the phosphoserine modification. Positions 660–699 (ATQLEAILEQKIDILTELRDKVKSFRAALQEEEQASKQIN) form a coiled coil.

This sequence belongs to the TRAFAC class myosin-kinesin ATPase superfamily. Kinesin family. MCAK/KIF2 subfamily. In terms of assembly, interacts with AURKA and PLK1. Interacts with PSRC1. Interacts with MCRS1; the interaction enhances recruitment of KIF2A to the minus ends of spindle microtubules which promotes chromosome alignment.

Its subcellular location is the cytoplasm. It localises to the cytoskeleton. The protein localises to the microtubule organizing center. It is found in the centrosome. The protein resides in the spindle pole. Its subcellular location is the spindle. Functionally, plus end-directed microtubule-dependent motor required for normal brain development. May regulate microtubule dynamics during axonal growth. Required for normal progression through mitosis. Required for normal congress of chromosomes at the metaphase plate. Required for normal spindle dynamics during mitosis. Promotes spindle turnover. Implicated in formation of bipolar mitotic spindles. Has microtubule depolymerization activity. This Homo sapiens (Human) protein is Kinesin-like protein KIF2A (KIF2A).